The primary structure comprises 361 residues: Deoxyribonuclease-2-beta (361 aa).

A signal peptide spans 1–27 (MKQKMMARLLRTSFALLFLGLFGVLGA). 4 N-linked (GlcNAc...) asparagine glycosylation sites follow: Asn81, Asn103, Asn119, and Asn278.

It belongs to the DNase II family. As to expression, highly expressed in the eye lens and in salivary gland. Detected at lower levels in lung, prostate and lymph node. Isoform 2 is lung specific.

The protein localises to the lysosome. The enzyme catalyses Endonucleolytic cleavage to nucleoside 3'-phosphates and 3'-phosphooligonucleotide end-products.. Its function is as follows. Hydrolyzes DNA under acidic conditions. Does not require divalent cations for activity. Participates in the degradation of nuclear DNA during lens cell differentiation. This chain is Deoxyribonuclease-2-beta (DNASE2B), found in Homo sapiens (Human).